The primary structure comprises 349 residues: Protein-glutamate methylesterase/protein-glutamine glutaminase (349 aa).

The 118-residue stretch at 5 to 122 (RVLSVDDSAL…REGMLAYSEM (118 aa)) folds into the Response regulatory domain. Asp-56 is subject to 4-aspartylphosphate. One can recognise a CheB-type methylesterase domain in the interval 152-344 (LLSSEKLIAI…QQMLAKISAG (193 aa)). Residues Ser-164, His-190, and Asp-286 contribute to the active site.

The protein belongs to the CheB family. In terms of processing, phosphorylated by CheA. Phosphorylation of the N-terminal regulatory domain activates the methylesterase activity.

It is found in the cytoplasm. The enzyme catalyses [protein]-L-glutamate 5-O-methyl ester + H2O = L-glutamyl-[protein] + methanol + H(+). It carries out the reaction L-glutaminyl-[protein] + H2O = L-glutamyl-[protein] + NH4(+). In terms of biological role, involved in chemotaxis. Part of a chemotaxis signal transduction system that modulates chemotaxis in response to various stimuli. Catalyzes the demethylation of specific methylglutamate residues introduced into the chemoreceptors (methyl-accepting chemotaxis proteins or MCP) by CheR. Also mediates the irreversible deamidation of specific glutamine residues to glutamic acid. This chain is Protein-glutamate methylesterase/protein-glutamine glutaminase, found in Salmonella typhi.